The chain runs to 600 residues: Netrin-1 (600 aa).

An N-terminal signal peptide occupies residues 1–24; the sequence is MMRAMWEALAALAAVSCLVGAVRG. In terms of domain architecture, Laminin N-terminal spans 47–284; it reads HPRRCIPDFV…AVSDLQVGGR (238 aa). N-linked (GlcNAc...) asparagine glycans are attached at residues N95, N116, and N131. 14 disulfides stabilise this stretch: C119/C152, C285/C294, C287/C304, C306/C315, C318/C338, C341/C350, C343/C368, C371/C380, C383/C401, C404/C416, C406/C423, C425/C434, C437/C451, and C472/C544. Laminin EGF-like domains are found at residues 285 to 340, 341 to 403, and 404 to 453; these read CKCN…ECVA, CNCN…ACKA, and CDCH…PCIK. N417 is a glycosylation site (N-linked (GlcNAc...) asparagine). The region spanning 472–600 is the NTR domain; it reads CDSYCKASKG…KFQQREKKEL (129 aa). The Cell attachment site signature appears at 530–532; it reads RGD.

In terms of assembly, binds to its receptors; DCC, UNC5A, UNC5B, UNC5C and probably UNC5D. Binds to its receptor; DSCAM. Interacts with APP.

It is found in the secreted. The protein resides in the cytoplasm. In terms of biological role, netrins control guidance of CNS commissural axons and peripheral motor axons. Its association with either DCC or some UNC5 receptors will lead to axon attraction or repulsion, respectively. Binding to UNC5C might cause dissociation of UNC5C from polymerized TUBB3 in microtubules and thereby lead to increased microtubule dynamics and axon repulsion. Involved in dorsal root ganglion axon projection towards the spinal cord. It also serves as a survival factor via its association with its receptors which prevent the initiation of apoptosis. Involved in colorectal tumorigenesis by regulating apoptosis. This Sus scrofa (Pig) protein is Netrin-1 (NTN1).